A 387-amino-acid polypeptide reads, in one-letter code: 3-ketoacyl-CoA thiolase (387 aa).

Cys-91 serves as the catalytic Acyl-thioester intermediate. Catalysis depends on proton acceptor residues His-343 and Cys-373.

Belongs to the thiolase-like superfamily. Thiolase family. As to quaternary structure, heterotetramer of two alpha chains (FadB) and two beta chains (FadA).

It is found in the cytoplasm. It catalyses the reaction an acyl-CoA + acetyl-CoA = a 3-oxoacyl-CoA + CoA. It functions in the pathway lipid metabolism; fatty acid beta-oxidation. Its function is as follows. Catalyzes the final step of fatty acid oxidation in which acetyl-CoA is released and the CoA ester of a fatty acid two carbons shorter is formed. This Escherichia coli O6:K15:H31 (strain 536 / UPEC) protein is 3-ketoacyl-CoA thiolase.